The chain runs to 228 residues: Urease accessory protein UreF (228 aa).

The protein belongs to the UreF family. As to quaternary structure, ureD, UreF and UreG form a complex that acts as a GTP-hydrolysis-dependent molecular chaperone, activating the urease apoprotein by helping to assemble the nickel containing metallocenter of UreC. The UreE protein probably delivers the nickel.

The protein localises to the cytoplasm. Its function is as follows. Required for maturation of urease via the functional incorporation of the urease nickel metallocenter. In Yersinia pestis bv. Antiqua (strain Antiqua), this protein is Urease accessory protein UreF.